Here is a 353-residue protein sequence, read N- to C-terminus: Putative actin-28 (353 aa).

Belongs to the actin family.

It localises to the cytoplasm. The protein localises to the cytoskeleton. The enzyme catalyses ATP + H2O = ADP + phosphate + H(+). Functionally, actins are highly conserved proteins that are involved in various types of cell motility and are ubiquitously expressed in all eukaryotic cells. Multiple isoforms are involved in various cellular functions such as cytoskeleton structure, cell mobility, chromosome movement and muscle contraction. The sequence is that of Putative actin-28 (act28) from Dictyostelium discoideum (Social amoeba).